Here is a 323-residue protein sequence, read N- to C-terminus: Ribose 1,5-bisphosphate isomerase (323 aa).

Substrate is bound by residues 22–25 (RGAA) and R65. The active-site Proton acceptor is the C130. The active-site Proton donor is the D199. Substrate contacts are provided by residues 209-210 (NK) and K235. A Glycyl lysine isopeptide (Lys-Gly) (interchain with G-Cter in SAMP2) cross-link involves residue K210.

It belongs to the eIF-2B alpha/beta/delta subunits family. R15P isomerase subfamily.

It catalyses the reaction alpha-D-ribose 1,5-bisphosphate = D-ribulose 1,5-bisphosphate. Catalyzes the isomerization of ribose 1,5-bisphosphate (R15P) to ribulose 1,5-bisphosphate (RuBP), the CO(2) acceptor and substrate for RubisCO. Functions in an archaeal AMP degradation pathway, together with AMP phosphorylase and RubisCO. This Haloferax volcanii (strain ATCC 29605 / DSM 3757 / JCM 8879 / NBRC 14742 / NCIMB 2012 / VKM B-1768 / DS2) (Halobacterium volcanii) protein is Ribose 1,5-bisphosphate isomerase.